Reading from the N-terminus, the 469-residue chain is UDP-N-acetylmuramoylalanine--D-glutamate ligase (469 aa).

123 to 129 provides a ligand contact to ATP; it reads GTNGKST.

The protein belongs to the MurCDEF family.

It is found in the cytoplasm. It carries out the reaction UDP-N-acetyl-alpha-D-muramoyl-L-alanine + D-glutamate + ATP = UDP-N-acetyl-alpha-D-muramoyl-L-alanyl-D-glutamate + ADP + phosphate + H(+). It participates in cell wall biogenesis; peptidoglycan biosynthesis. Its function is as follows. Cell wall formation. Catalyzes the addition of glutamate to the nucleotide precursor UDP-N-acetylmuramoyl-L-alanine (UMA). This is UDP-N-acetylmuramoylalanine--D-glutamate ligase from Caulobacter sp. (strain K31).